Reading from the N-terminus, the 113-residue chain is Hydrogenase maturation factor HypA (113 aa).

H2 is a binding site for Ni(2+). C73, C76, C89, and C92 together coordinate Zn(2+).

This sequence belongs to the HypA/HybF family.

In terms of biological role, involved in the maturation of [NiFe] hydrogenases. Required for nickel insertion into the metal center of the hydrogenase. The chain is Hydrogenase maturation factor HypA from Cereibacter sphaeroides (strain ATCC 17023 / DSM 158 / JCM 6121 / CCUG 31486 / LMG 2827 / NBRC 12203 / NCIMB 8253 / ATH 2.4.1.) (Rhodobacter sphaeroides).